The following is a 535-amino-acid chain: GMP synthase [glutamine-hydrolyzing] (535 aa).

The region spanning 24–217 (KILIVDFGSQ…VRKVAGLTGD (194 aa)) is the Glutamine amidotransferase type-1 domain. The active-site Nucleophile is the Cys101. Residues His191 and Glu193 contribute to the active site. In terms of domain architecture, GMPS ATP-PPase spans 218–410 (WTMRAFREEA…LGLPEIFVGR (193 aa)). 245-251 (SGGVDSS) is an ATP binding site.

In terms of assembly, homodimer.

It catalyses the reaction XMP + L-glutamine + ATP + H2O = GMP + L-glutamate + AMP + diphosphate + 2 H(+). It functions in the pathway purine metabolism; GMP biosynthesis; GMP from XMP (L-Gln route): step 1/1. Catalyzes the synthesis of GMP from XMP. This Nitrobacter winogradskyi (strain ATCC 25391 / DSM 10237 / CIP 104748 / NCIMB 11846 / Nb-255) protein is GMP synthase [glutamine-hydrolyzing].